We begin with the raw amino-acid sequence, 168 residues long: Oocyte-secreted protein 2 (168 aa).

An N-terminal signal peptide occupies residues 1–21 (MGVSMALEVLVYLAVLVWTCA).

This sequence belongs to the PLAC1 family. Expressed in ovaries. Highly expressed in the germinal vesicles oocytes and metaphase II oocytes.

The protein resides in the secreted. Its subcellular location is the cytoplasm. This chain is Oocyte-secreted protein 2 (Oosp2), found in Mus musculus (Mouse).